The following is a 459-amino-acid chain: Phosphomethylpyrimidine synthase (459 aa).

Substrate is bound by residues N80, M109, Y139, H175, 195–197 (SRG), 236–239 (DSLR), and E275. Position 279 (H279) interacts with Zn(2+). A substrate-binding site is contributed by Y302. Position 343 (H343) interacts with Zn(2+). C423, C426, and C431 together coordinate [4Fe-4S] cluster.

Belongs to the ThiC family. [4Fe-4S] cluster serves as cofactor.

It carries out the reaction 5-amino-1-(5-phospho-beta-D-ribosyl)imidazole + S-adenosyl-L-methionine = 4-amino-2-methyl-5-(phosphooxymethyl)pyrimidine + CO + 5'-deoxyadenosine + formate + L-methionine + 3 H(+). It participates in cofactor biosynthesis; thiamine diphosphate biosynthesis. In terms of biological role, catalyzes the synthesis of the hydroxymethylpyrimidine phosphate (HMP-P) moiety of thiamine from aminoimidazole ribotide (AIR) in a radical S-adenosyl-L-methionine (SAM)-dependent reaction. The protein is Phosphomethylpyrimidine synthase of Prochlorococcus marinus (strain MIT 9211).